The sequence spans 241 residues: Uridylate kinase (241 aa).

15–18 contacts ATP; sequence KLSG. Residues 23 to 28 are involved in allosteric activation by GTP; that stretch reads GAEGFG. G57 contributes to the UMP binding site. ATP is bound by residues G58 and R62. UMP is bound by residues D77 and 138–145; that span reads TGNPFFTT. T165, Y171, and D174 together coordinate ATP.

Belongs to the UMP kinase family. As to quaternary structure, homohexamer.

It is found in the cytoplasm. The catalysed reaction is UMP + ATP = UDP + ADP. It participates in pyrimidine metabolism; CTP biosynthesis via de novo pathway; UDP from UMP (UMPK route): step 1/1. Allosterically activated by GTP. Inhibited by UTP. In terms of biological role, catalyzes the reversible phosphorylation of UMP to UDP. The sequence is that of Uridylate kinase from Yersinia pseudotuberculosis serotype O:1b (strain IP 31758).